Reading from the N-terminus, the 875-residue chain is Alanine--tRNA ligase (875 aa).

Zn(2+)-binding residues include His563, His567, Cys665, and His669.

The protein belongs to the class-II aminoacyl-tRNA synthetase family. The cofactor is Zn(2+).

The protein resides in the cytoplasm. The catalysed reaction is tRNA(Ala) + L-alanine + ATP = L-alanyl-tRNA(Ala) + AMP + diphosphate. In terms of biological role, catalyzes the attachment of alanine to tRNA(Ala) in a two-step reaction: alanine is first activated by ATP to form Ala-AMP and then transferred to the acceptor end of tRNA(Ala). Also edits incorrectly charged Ser-tRNA(Ala) and Gly-tRNA(Ala) via its editing domain. The polypeptide is Alanine--tRNA ligase (Shewanella pealeana (strain ATCC 700345 / ANG-SQ1)).